Consider the following 272-residue polypeptide: Putative pyruvate, phosphate dikinase regulatory protein (272 aa).

An ADP-binding site is contributed by 149–156 (GVSRTSKT).

This sequence belongs to the pyruvate, phosphate/water dikinase regulatory protein family. PDRP subfamily.

It catalyses the reaction N(tele)-phospho-L-histidyl/L-threonyl-[pyruvate, phosphate dikinase] + ADP = N(tele)-phospho-L-histidyl/O-phospho-L-threonyl-[pyruvate, phosphate dikinase] + AMP + H(+). The catalysed reaction is N(tele)-phospho-L-histidyl/O-phospho-L-threonyl-[pyruvate, phosphate dikinase] + phosphate + H(+) = N(tele)-phospho-L-histidyl/L-threonyl-[pyruvate, phosphate dikinase] + diphosphate. Bifunctional serine/threonine kinase and phosphorylase involved in the regulation of the pyruvate, phosphate dikinase (PPDK) by catalyzing its phosphorylation/dephosphorylation. In Lactiplantibacillus plantarum (strain ATCC BAA-793 / NCIMB 8826 / WCFS1) (Lactobacillus plantarum), this protein is Putative pyruvate, phosphate dikinase regulatory protein.